Consider the following 746-residue polypeptide: MEGPEIQFSEAVIDNGRFGKRTIRFETGRLAQQAAGAAMVYIDDDTALLSATTAGKQPREGFDFFPLTVDVEERMYAAGRIPGSFFRREGRPSTEAILACRLMDRPLRPAFVKGLRNEVQIVVTVLAINPDELYDVVAINASSMSTQLSGLPFSGPIGGVRVALIEDQWVAFPRHSEMEKAVFNMVVAGRVAGDDVAIMMVEAEATDNSWNLIKENGATAPTEEIVSEGLEAAKPFIKALCEAQADLAARAAKPTVEFPIFLDYQDDIFEAVNAAAAAKLTEVFQIADKQERDNASDALKDEVVSSLSSKFDGREKEISAAFRSVTKQVVRQRILKDQIRIDGRGLTDIRQLTAEVEVLPRVHGSAIFERGETQIMGVTTLNMLKMEQQIDSLSPVTRKRYMHNYNFPPYSTGETGRVGSPKRREIGHGALAERALVPVLPSREEFPYAIRQVSEALSSNGSTSMGSVCASTLSLLNAGVPLKAPVAGIAMGLVSDQVDGQTRYAALTDILGAEDAFGDMDFKVAGTSEFVTAIQLDTKLDGIPASVLAAALKQAREARLHILGVLNAAIDVPDELSEFAPRVIAVKIPVDKIGEVIGPKGKMINQIQEDTGADISIEDDGTVYIGATNGPSADAARSAINAIANPQIPEIGERYLGTVVKTTTFGAFVSLTPGKDGLLHVTELRKINDGKRVDNVDDVVSVGQKIQVEITKIDDRGKLSLSPVVAEDAAAADSAEAAEPAEAAAN.

Positions 515 and 521 each coordinate Mg(2+). One can recognise a KH domain in the interval 581–640 (PRVIAVKIPVDKIGEVIGPKGKMINQIQEDTGADISIEDDGTVYIGATNGPSADAARSAI). Residues 652-724 (GERYLGTVVK…DRGKLSLSPV (73 aa)) enclose the S1 motif domain.

It belongs to the polyribonucleotide nucleotidyltransferase family. Mg(2+) is required as a cofactor.

It localises to the cytoplasm. The enzyme catalyses RNA(n+1) + phosphate = RNA(n) + a ribonucleoside 5'-diphosphate. Its function is as follows. Involved in mRNA degradation. Catalyzes the phosphorolysis of single-stranded polyribonucleotides processively in the 3'- to 5'-direction. The sequence is that of Polyribonucleotide nucleotidyltransferase from Renibacterium salmoninarum (strain ATCC 33209 / DSM 20767 / JCM 11484 / NBRC 15589 / NCIMB 2235).